Here is a 463-residue protein sequence, read N- to C-terminus: Aromatic amino acid transport protein AroP (463 aa).

The next 12 membrane-spanning stretches (helical) occupy residues 18–38 (TMMG…GVGI), 40–60 (AAGP…VLVM), 84–104 (FGHW…IMVM), 117–137 (AWFG…FAVV), 157–177 (VAVI…WLPG), 200–220 (VAAG…VTIA), 237–257 (AVIW…TFLM), 276–296 (ILAM…IVLA), 337–357 (AVLL…WNPA), 358–378 (GLLD…WAMI), 402–422 (AHPW…ALML), and 431–451 (VYSV…TVNS).

This sequence belongs to the amino acid-polyamine-organocation (APC) superfamily. Amino acid transporter (AAT) (TC 2.A.3.1) family.

The protein resides in the cell membrane. The enzyme catalyses L-phenylalanine(in) + H(+)(in) = L-phenylalanine(out) + H(+)(out). The catalysed reaction is L-tryptophan(in) + H(+)(in) = L-tryptophan(out) + H(+)(out). It carries out the reaction L-tyrosine(in) + H(+)(in) = L-tyrosine(out) + H(+)(out). Its function is as follows. Permease that is involved in the active transport across the cytoplasmic membrane of all three aromatic amino acids, phenylalanine, tyrosine and tryptophan. The protein is Aromatic amino acid transport protein AroP of Corynebacterium glutamicum (strain ATCC 13032 / DSM 20300 / JCM 1318 / BCRC 11384 / CCUG 27702 / LMG 3730 / NBRC 12168 / NCIMB 10025 / NRRL B-2784 / 534).